The primary structure comprises 424 residues: Insertion element IS2A uncharacterized 48.2 kDa protein (424 aa).

The Integrase catalytic domain occupies 229–412 (KPAVPPSKRA…SPREYLRHGA (184 aa)).

This sequence belongs to the transposase 8 family.

The protein is Insertion element IS2A uncharacterized 48.2 kDa protein of Escherichia coli.